The following is a 426-amino-acid chain: Pistil-specific extensin-like protein (426 aa).

An N-terminal signal peptide occupies residues 1 to 23; that stretch reads MAVIISSKVLLIQLFVLVLGSFS. Disordered stretches follow at residues 56–109 and 121–254; these read GPTF…GSKL and NLPD…AAEP. 4 stretches are compositionally biased toward pro residues: residues 60–94, 123–161, 168–224, and 231–254; these read VLPPPSPLPSPPPPSPSPPPPSPSPPPPSTIPLIP, PDVPPIGGGPPVNQPKPSSPSPLVKPPPPPPSPCKPSPP, PPQP…PPPP, and LLPPPPPVAYPPVMTPSPSPAAEP. 3 consecutive repeat copies span residues 69 to 73, 76 to 80, and 83 to 87. The interval 69-182 is 4 X 5 AA repeats of S-P(4); that stretch reads SPPPPSPSPP…PAKQPSPPPP (114 aa). Repeat unit 4 spans residues 178–182; it reads SPPPP. The N-linked (GlcNAc...) asparagine glycan is linked to Asn310.

Pistil (stigma and style tissue).

In Nicotiana tabacum (Common tobacco), this protein is Pistil-specific extensin-like protein.